We begin with the raw amino-acid sequence, 445 residues long: Argininosuccinate synthase (445 aa).

ATP contacts are provided by residues 17–25 (AFSGGLDTS) and alanine 43. Tyrosine 99 contributes to the L-citrulline binding site. The ATP site is built by glycine 129 and threonine 131. 3 residues coordinate L-aspartate: threonine 131, asparagine 135, and aspartate 136. Position 135 (asparagine 135) interacts with L-citrulline. Aspartate 136 contacts ATP. Arginine 139 and serine 192 together coordinate L-citrulline. Aspartate 194 provides a ligand contact to ATP. L-citrulline-binding residues include threonine 201, glutamate 203, and glutamate 280.

This sequence belongs to the argininosuccinate synthase family. Type 2 subfamily. As to quaternary structure, homotetramer.

The protein localises to the cytoplasm. The enzyme catalyses L-citrulline + L-aspartate + ATP = 2-(N(omega)-L-arginino)succinate + AMP + diphosphate + H(+). It functions in the pathway amino-acid biosynthesis; L-arginine biosynthesis; L-arginine from L-ornithine and carbamoyl phosphate: step 2/3. The sequence is that of Argininosuccinate synthase from Gemmatimonas aurantiaca (strain DSM 14586 / JCM 11422 / NBRC 100505 / T-27).